The primary structure comprises 174 residues: Large ribosomal subunit protein uL10 (174 aa).

This sequence belongs to the universal ribosomal protein uL10 family. In terms of assembly, part of the ribosomal stalk of the 50S ribosomal subunit. The N-terminus interacts with L11 and the large rRNA to form the base of the stalk. The C-terminus forms an elongated spine to which L12 dimers bind in a sequential fashion forming a multimeric L10(L12)X complex.

Forms part of the ribosomal stalk, playing a central role in the interaction of the ribosome with GTP-bound translation factors. This is Large ribosomal subunit protein uL10 from Syntrophus aciditrophicus (strain SB).